Here is a 336-residue protein sequence, read N- to C-terminus: Foldase protein PrsA (336 aa).

An N-terminal signal peptide occupies residues 1–22; sequence MKSAKKLLSVLCLGIFILTFTA. Cys-23 carries N-palmitoyl cysteine lipidation. The S-diacylglycerol cysteine moiety is linked to residue Cys-23. One can recognise a PpiC domain in the interval 194–286; that stretch reads PNTMNVSHIL…FGYHIIKINS (93 aa).

This sequence belongs to the PrsA family.

It is found in the cell membrane. It catalyses the reaction [protein]-peptidylproline (omega=180) = [protein]-peptidylproline (omega=0). Plays a major role in protein secretion by helping the post-translocational extracellular folding of several secreted proteins. This Clostridium botulinum (strain Kyoto / Type A2) protein is Foldase protein PrsA.